A 312-amino-acid polypeptide reads, in one-letter code: Isochorismatase (312 aa).

The Carrier domain maps to 229-302 (VFTCENIRKQ…EWQKLLTTRS (74 aa)). At serine 263 the chain carries O-(pantetheine 4'-phosphoryl)serine.

Belongs to the isochorismatase family.

It carries out the reaction isochorismate + H2O = (2S,3S)-2,3-dihydroxy-2,3-dihydrobenzoate + pyruvate. Its pathway is siderophore biosynthesis; bacillibactin biosynthesis. This is Isochorismatase (dhbB) from Bacillus subtilis (strain 168).